An 891-amino-acid chain; its full sequence is DNA mismatch repair protein MutS (891 aa).

Gly-646 to Ser-653 contributes to the ATP binding site.

Belongs to the DNA mismatch repair MutS family.

In terms of biological role, this protein is involved in the repair of mismatches in DNA. It is possible that it carries out the mismatch recognition step. This protein has a weak ATPase activity. In Rickettsia typhi (strain ATCC VR-144 / Wilmington), this protein is DNA mismatch repair protein MutS.